The following is a 308-amino-acid chain: Glutaminase (308 aa).

Substrate is bound by residues Ser66, Asn117, Glu161, Asn168, Tyr192, Tyr244, and Val262.

The protein belongs to the glutaminase family. Homotetramer.

The enzyme catalyses L-glutamine + H2O = L-glutamate + NH4(+). In Photorhabdus laumondii subsp. laumondii (strain DSM 15139 / CIP 105565 / TT01) (Photorhabdus luminescens subsp. laumondii), this protein is Glutaminase.